A 488-amino-acid polypeptide reads, in one-letter code: Glycogen synthase (488 aa).

Arg-20 is an ADP-alpha-D-glucose binding site.

It belongs to the glycosyltransferase 1 family. Bacterial/plant glycogen synthase subfamily.

The catalysed reaction is [(1-&gt;4)-alpha-D-glucosyl](n) + ADP-alpha-D-glucose = [(1-&gt;4)-alpha-D-glucosyl](n+1) + ADP + H(+). It functions in the pathway glycan biosynthesis; glycogen biosynthesis. Synthesizes alpha-1,4-glucan chains using ADP-glucose. The chain is Glycogen synthase from Chlorobaculum tepidum (strain ATCC 49652 / DSM 12025 / NBRC 103806 / TLS) (Chlorobium tepidum).